Consider the following 577-residue polypeptide: Isocitrate dehydrogenase kinase/phosphatase (577 aa).

Residues 324–330 and Lys345 each bind ATP; that span reads APGIRGL. Residue Asp380 is part of the active site.

It belongs to the AceK family.

It localises to the cytoplasm. The enzyme catalyses L-seryl-[isocitrate dehydrogenase] + ATP = O-phospho-L-seryl-[isocitrate dehydrogenase] + ADP + H(+). In terms of biological role, bifunctional enzyme which can phosphorylate or dephosphorylate isocitrate dehydrogenase (IDH) on a specific serine residue. This is a regulatory mechanism which enables bacteria to bypass the Krebs cycle via the glyoxylate shunt in response to the source of carbon. When bacteria are grown on glucose, IDH is fully active and unphosphorylated, but when grown on acetate or ethanol, the activity of IDH declines drastically concomitant with its phosphorylation. This is Isocitrate dehydrogenase kinase/phosphatase from Pseudoalteromonas atlantica (strain T6c / ATCC BAA-1087).